The following is a 342-amino-acid chain: Subtilisin-like serine protease Rho m 2.0101 (342 aa).

Residues 1–30 constitute a propeptide, removed in mature form; sequence TMELLEDLIEQVRQLPMVNFIEKNSLVHAN. Residues 1–30 enclose the Inhibitor I9 domain; the sequence is TMELLEDLIEQVRQLPMVNFIEKNSLVHAN. Positions 39 to 342 constitute a Peptidase S8 domain; sequence PWGLARISHR…GQNLTKFWGH (304 aa). Catalysis depends on charge relay system residues Asp-75 and His-107. 2 N-linked (GlcNAc...) asparagine glycosylation sites follow: Asn-137 and Asn-171. Ser-267 serves as the catalytic Charge relay system. Asn-335 carries N-linked (GlcNAc...) asparagine glycosylation.

It belongs to the peptidase S8 family.

In terms of biological role, serine protease. The sequence is that of Subtilisin-like serine protease Rho m 2.0101 from Rhodotorula mucilaginosa (Yeast).